Consider the following 113-residue polypeptide: Molt-inhibiting hormone (113 aa).

The signal sequence occupies residues 1 to 35; the sequence is MMSRTESRYSSQRTWLLSMVVLAALWSISVQRATA. 3 cysteine pairs are disulfide-bonded: C42-C79, C59-C75, and C62-C88.

The protein belongs to the arthropod CHH/MIH/GIH/VIH hormone family.

The protein resides in the secreted. Inhibits Y-organs where molting hormone (ecdysteroid) is secreted. A molting cycle is initiated when MIH secretion diminishes or stops. This chain is Molt-inhibiting hormone, found in Metacarcinus magister (Dungeness crab).